We begin with the raw amino-acid sequence, 260 residues long: Type II methyltransferase M1.MboII (260 aa).

Residues C12, D30, K197, 223–225 (SGT), and 241–242 (DM) each bind S-adenosyl-L-methionine.

It belongs to the N(4)/N(6)-methyltransferase family. As to quaternary structure, at low concentration exists as a monomer and homodimer. Probably binds to DNA as a monomer.

It catalyses the reaction a 2'-deoxyadenosine in DNA + S-adenosyl-L-methionine = an N(6)-methyl-2'-deoxyadenosine in DNA + S-adenosyl-L-homocysteine + H(+). A beta subtype methylase that recognizes the double-stranded sequence 5'-GAAGA-3', methylates A-5 on the top strand, and protects the DNA from cleavage by the MboII endonuclease. It is not known if the cytosine of the complementary sequence TCTTC is also methylated by this enzyme. The chain is Type II methyltransferase M1.MboII from Moraxella bovis.